The primary structure comprises 435 residues: Kynurenine--oxoglutarate transaminase (435 aa).

Residues Gly46 and Asn198 each contribute to the substrate site. Lys262 is subject to N6-(pyridoxal phosphate)lysine. Substrate is bound at residue Arg413.

The protein belongs to the class-I pyridoxal-phosphate-dependent aminotransferase family. In terms of assembly, homodimer. It depends on pyridoxal 5'-phosphate as a cofactor.

The protein localises to the cytoplasm. It carries out the reaction L-kynurenine + 2-oxoglutarate = kynurenate + L-glutamate + H2O. The catalysed reaction is 3-phenylpyruvate + L-glutamine = 2-oxoglutaramate + L-phenylalanine. The enzyme catalyses an S-substituted L-cysteine + H2O = a thiol + pyruvate + NH4(+). The protein operates within amino-acid degradation; L-kynurenine degradation; kynurenate from L-kynurenine: step 1/2. Its function is as follows. Catalyzes the irreversible transamination of the L-tryptophan metabolite L-kynurenine to form kynurenic acid (KA). Metabolizes the cysteine conjugates of certain halogenated alkenes and alkanes to form reactive metabolites. Catalyzes the beta-elimination of S-conjugates and Se-conjugates of L-(seleno)cysteine, resulting in the cleavage of the C-S or C-Se bond. This Dictyostelium discoideum (Social amoeba) protein is Kynurenine--oxoglutarate transaminase (ccbl).